The sequence spans 206 residues: Large ribosomal subunit protein uL4 (206 aa).

The protein belongs to the universal ribosomal protein uL4 family. In terms of assembly, part of the 50S ribosomal subunit.

One of the primary rRNA binding proteins, this protein initially binds near the 5'-end of the 23S rRNA. It is important during the early stages of 50S assembly. It makes multiple contacts with different domains of the 23S rRNA in the assembled 50S subunit and ribosome. Its function is as follows. Forms part of the polypeptide exit tunnel. The chain is Large ribosomal subunit protein uL4 from Bradyrhizobium sp. (strain ORS 278).